The sequence spans 468 residues: MSSGKIAQVVGPVVDVVFASGDKLPEINNALIVYKDGDKKQKIVLEVALELGDGMVRTIAMESTDGLTRGLEVLDTGRAISVPVGKETLGRVFNVLGETIDLEAPFADDVNREPIHKKAPAFDELSTSSEILETGIKVIDLLAPYLKGGKVGLFGGAGVGKTVLIQELIHNIAQEHGGISVFTGVGERTREGNDLYWEMKESGVIEKTAMVFGQMNEPPGARMRVALTGLTIAEYFRDVEGQDVLLFIDNIFRFTQAGSEVSALLGRMPSAVGYQPTLATEMGQLQERITSTKKGSVTSIQAIYVPADDYTDPAPATAFAHLDSTTNLERKLTQMGIYPAVDPLASSSRALSPEIVGEEHYAVATEVQRVLQRYRELQDIIAILGMDELSEEEKTLVGRARRIQFFLSQNFNVAEQFTGLPGSYVPVAETVRGFKEILEGKHDHLPEDAFRAVGPIEDVIEKAKKMGF.

Position 155–162 (155–162 (GGAGVGKT)) interacts with ATP.

The protein belongs to the ATPase alpha/beta chains family. As to quaternary structure, F-type ATPases have 2 components, CF(1) - the catalytic core - and CF(0) - the membrane proton channel. CF(1) has five subunits: alpha(3), beta(3), gamma(1), delta(1), epsilon(1). CF(0) has three main subunits: a(1), b(2) and c(9-12). The alpha and beta chains form an alternating ring which encloses part of the gamma chain. CF(1) is attached to CF(0) by a central stalk formed by the gamma and epsilon chains, while a peripheral stalk is formed by the delta and b chains.

The protein localises to the cell membrane. It carries out the reaction ATP + H2O + 4 H(+)(in) = ADP + phosphate + 5 H(+)(out). Produces ATP from ADP in the presence of a proton gradient across the membrane. The catalytic sites are hosted primarily by the beta subunits. This Streptococcus equi subsp. zooepidemicus (strain H70) protein is ATP synthase subunit beta.